Consider the following 122-residue polypeptide: MAKKGNISSRNLRISDQIQKELAEMIQREIRDPRLGLVTLQSVALTPDYAHAKVYFTVLGAEPEVAAAILKEKAGYLHSLLFKRLHIHTVPTLHFHHDTSVEHAIEMSKLINEANATRSKDD.

It belongs to the RbfA family. Monomer. Binds 30S ribosomal subunits, but not 50S ribosomal subunits or 70S ribosomes.

The protein resides in the cytoplasm. Functionally, one of several proteins that assist in the late maturation steps of the functional core of the 30S ribosomal subunit. Associates with free 30S ribosomal subunits (but not with 30S subunits that are part of 70S ribosomes or polysomes). Required for efficient processing of 16S rRNA. May interact with the 5'-terminal helix region of 16S rRNA. This is Ribosome-binding factor A from Cupriavidus pinatubonensis (strain JMP 134 / LMG 1197) (Cupriavidus necator (strain JMP 134)).